Reading from the N-terminus, the 902-residue chain is Protein translocase subunit SecA (902 aa).

ATP contacts are provided by residues glutamine 89, 107 to 111, and aspartate 502; that span reads GEGKT. Positions 884, 886, 895, and 896 each coordinate Zn(2+).

Belongs to the SecA family. Monomer and homodimer. Part of the essential Sec protein translocation apparatus which comprises SecA, SecYEG and auxiliary proteins SecDF-YajC and YidC. Zn(2+) serves as cofactor.

The protein resides in the cell inner membrane. Its subcellular location is the cytoplasm. It carries out the reaction ATP + H2O + cellular proteinSide 1 = ADP + phosphate + cellular proteinSide 2.. Functionally, part of the Sec protein translocase complex. Interacts with the SecYEG preprotein conducting channel. Has a central role in coupling the hydrolysis of ATP to the transfer of proteins into and across the cell membrane, serving both as a receptor for the preprotein-SecB complex and as an ATP-driven molecular motor driving the stepwise translocation of polypeptide chains across the membrane. In Agrobacterium fabrum (strain C58 / ATCC 33970) (Agrobacterium tumefaciens (strain C58)), this protein is Protein translocase subunit SecA.